The sequence spans 160 residues: Sec-independent protein translocase protein TatB (160 aa).

Residues 1–21 traverse the membrane as a helical segment; sequence MFGMGFFEILVVLVVAIIFLG. The segment at 118 to 160 is disordered; it reads HLNEEVSNEEALNKEVSSDESPKEVQLATDNNTKEHDKEKENV. 2 stretches are compositionally biased toward basic and acidic residues: residues 128–140 and 149–160; these read ALNKEVSSDESPK and NTKEHDKEKENV.

The protein belongs to the TatB family. As to quaternary structure, the Tat system comprises two distinct complexes: a TatABC complex, containing multiple copies of TatA, TatB and TatC subunits, and a separate TatA complex, containing only TatA subunits. Substrates initially bind to the TatABC complex, which probably triggers association of the separate TatA complex to form the active translocon.

Its subcellular location is the cell inner membrane. Part of the twin-arginine translocation (Tat) system that transports large folded proteins containing a characteristic twin-arginine motif in their signal peptide across membranes. Together with TatC, TatB is part of a receptor directly interacting with Tat signal peptides. TatB may form an oligomeric binding site that transiently accommodates folded Tat precursor proteins before their translocation. This chain is Sec-independent protein translocase protein TatB, found in Helicobacter pylori (strain ATCC 700392 / 26695) (Campylobacter pylori).